Consider the following 602-residue polypeptide: Ligand-dependent nuclear receptor corepressor-like protein (602 aa).

The interval 104–124 (PSLDSSQSTPTEELSSQGQSN) is disordered. Over residues 106–124 (LDSSQSTPTEELSSQGQSN) the composition is skewed to polar residues. Residues K242, K319, K340, and K397 each participate in a glycyl lysine isopeptide (Lys-Gly) (interchain with G-Cter in SUMO2) cross-link. 2 disordered regions span residues 495 to 521 (TVDGTSENTEDGLDRKDSKQPRKKRGR) and 564 to 602 (ERSGTLKTPPKKKLRLPDTGLYNMTDSGTGSCKNSSKPV). Positions 516–568 (RKKRGRYRQYDHEIMEEAIAMVMSGKMSVSKAQGIYGVPHSTLEYKVKERSGT) constitute an HTH psq-type domain. Positions 544–564 (VSKAQGIYGVPHSTLEYKVKE) form a DNA-binding region, H-T-H motif. Residues 585–602 (YNMTDSGTGSCKNSSKPV) show a composition bias toward polar residues.

Its subcellular location is the nucleus. May act as transcription activator that binds DNA elements with the sequence 5'-CCCTATCGATCGATCTCTACCT-3'. May play a role in spermatogenesis. The chain is Ligand-dependent nuclear receptor corepressor-like protein (LCORL) from Homo sapiens (Human).